Here is a 69-residue protein sequence, read N- to C-terminus: Large ribosomal subunit protein bL28 (69 aa).

Belongs to the bacterial ribosomal protein bL28 family.

The chain is Large ribosomal subunit protein bL28 from Lawsonia intracellularis (strain PHE/MN1-00).